The chain runs to 716 residues: DNA ligase (716 aa).

Residues 49 to 53 (DAEYD), 98 to 99 (SL), and E131 contribute to the NAD(+) site. K133 serves as the catalytic N6-AMP-lysine intermediate. 4 residues coordinate NAD(+): R154, E191, K308, and K332. The Zn(2+) site is built by C437, C439, C461, and C467. Residues 638 to 716 (KRHSPIATKT…EDEWLQLIAE (79 aa)) enclose the BRCT domain.

Belongs to the NAD-dependent DNA ligase family. LigA subfamily. It depends on Mg(2+) as a cofactor. The cofactor is Mn(2+).

The enzyme catalyses NAD(+) + (deoxyribonucleotide)n-3'-hydroxyl + 5'-phospho-(deoxyribonucleotide)m = (deoxyribonucleotide)n+m + AMP + beta-nicotinamide D-nucleotide.. Its function is as follows. DNA ligase that catalyzes the formation of phosphodiester linkages between 5'-phosphoryl and 3'-hydroxyl groups in double-stranded DNA using NAD as a coenzyme and as the energy source for the reaction. It is essential for DNA replication and repair of damaged DNA. In Bradyrhizobium sp. (strain BTAi1 / ATCC BAA-1182), this protein is DNA ligase.